The following is a 619-amino-acid chain: Putative zinc metalloprotease CT_072 (619 aa).

H20 provides a ligand contact to Zn(2+). E21 is an active-site residue. H24 is a Zn(2+) binding site. 3 consecutive transmembrane segments (helical) span residues 103–125 (IFVLAAGPLANLLVAIFVFGILY), 558–580 (VLNLLPIPVLDGGYILLCLWEIL), and 593–610 (ALVPFMILLVLFFVFLTL).

It belongs to the peptidase M50B family. The cofactor is Zn(2+).

The protein resides in the cell inner membrane. This is Putative zinc metalloprotease CT_072 from Chlamydia trachomatis serovar D (strain ATCC VR-885 / DSM 19411 / UW-3/Cx).